The sequence spans 2617 residues: Ubiquitin carboxyl-terminal hydrolase 24 (2617 aa).

The UBA domain maps to 3-44; sequence SEEEQHMTTLLCMGFSDPATIRKALRLAKNDINEAVALLTNE. Residues 45–99 form a disordered region; that stretch reads RPGLDYGGYEPMDSGGPSPGPGGGPRGDSGSDGSGPSRGGSTGGGGGFDPPPAYH. A phosphoserine mark is found at serine 62 and serine 85. Residues 65–92 are compositionally biased toward gly residues; it reads PGGGPRGDSGSDGSGPSRGGSTGGGGGF. The residue at position 939 (tyrosine 939) is a Phosphotyrosine. 2 disordered regions span residues 1030–1056 and 1127–1148; these read KTSG…SGAF and LLSE…QQHQ. 2 stretches are compositionally biased toward low complexity: residues 1031-1056 and 1128-1148; these read TSGS…SGAF and LSET…QQHQ. Phosphoserine is present on residues serine 1138 and serine 1282. The USP domain occupies 1686–2039; the sequence is VGLRNGGATC…NAYMLFYQRV (354 aa). Cysteine 1695 functions as the Nucleophile in the catalytic mechanism. The interval 1920–1942 is disordered; that stretch reads QDSSSEVGENGRNMDQGGGGSPR. Phosphoserine is present on serine 1940. Histidine 1967 (proton acceptor) is an active-site residue. Residues serine 2044, serine 2074, and serine 2558 each carry the phosphoserine modification. Residues 2060 to 2087 are disordered; sequence AEDLSLSAPSSPEISPQSSPRPHRPNND. A compositionally biased stretch (low complexity) spans 2066–2079; the sequence is SAPSSPEISPQSSP. The residue at position 2562 (threonine 2562) is a Phosphothreonine. A disordered region spans residues 2572 to 2617; that stretch reads EKEQSGSSNGSESSPANENGERHLQQGSESPMMIGELRSDLDDVDP. Residues 2576-2589 show a composition bias toward low complexity; that stretch reads SGSSNGSESSPANE. At serine 2601 the chain carries Phosphoserine. Over residues 2608–2617 the composition is skewed to basic and acidic residues; sequence LRSDLDDVDP.

The protein belongs to the peptidase C19 family.

The catalysed reaction is Thiol-dependent hydrolysis of ester, thioester, amide, peptide and isopeptide bonds formed by the C-terminal Gly of ubiquitin (a 76-residue protein attached to proteins as an intracellular targeting signal).. Its function is as follows. Protease that can remove conjugated ubiquitin from target proteins and polyubiquitin chains. Deubiquitinates DDB2, preventing its proteasomal degradation. In Mus musculus (Mouse), this protein is Ubiquitin carboxyl-terminal hydrolase 24 (Usp24).